The sequence spans 216 residues: Small ribosomal subunit protein uS3 (216 aa).

The 73-residue stretch at 39–111 folds into the KH type-2 domain; the sequence is IYKFFDKLVR…DINLQVSLLK (73 aa).

The protein belongs to the universal ribosomal protein uS3 family. As to quaternary structure, part of the 30S ribosomal subunit. Forms a tight complex with proteins S10 and S14.

Functionally, binds the lower part of the 30S subunit head. Binds mRNA in the 70S ribosome, positioning it for translation. The sequence is that of Small ribosomal subunit protein uS3 from Mycoplasmopsis agalactiae (strain NCTC 10123 / CIP 59.7 / PG2) (Mycoplasma agalactiae).